Here is a 564-residue protein sequence, read N- to C-terminus: Dicarboxylate transporter 2, chloroplastic (564 aa).

A chloroplast-targeting transit peptide spans 1–22; that stretch reads MESLALLPTLSLSTTTTTSKAT. Positions 35 to 58 are disordered; it reads RRPHLSLSLSSTPKPTLTFSSHSH. Over residues 39 to 58 the composition is skewed to low complexity; the sequence is LSLSLSSTPKPTLTFSSHSH. Helical transmembrane passes span 94–114, 127–147, 166–186, 235–255, 262–282, 307–327, 356–376, 380–400, 415–435, 451–471, 484–504, and 538–558; these read GAKL…RFAV, LLAI…PVGA, TAFC…FFFA, AGGI…SLPG, LGTY…ALFL, VFWL…TPLI, VTKN…LWVF, IGVS…LLGV, TLAW…LGIV, LSWP…HYLF, AFLA…LALA, and MGFI…GVWW.

This sequence belongs to the SLC13A/DASS transporter (TC 2.A.47) family. DIT1 subfamily. As to expression, expressed in leaves.

It is found in the plastid. The protein resides in the chloroplast inner membrane. Functionally, glutamate/malate translocator involved with DIT1 in primary ammonia assimilation and in the re-assimilation of ammonia generated by the photorespiratory pathway. Exports the end product of ammonia assimilation, glutamate, from plastids to the cytosol. The precursor for ammonia assimilation, 2-oxoglutarate, is imported from the cytosol by DIT1. The polypeptide is Dicarboxylate transporter 2, chloroplastic (DIT2) (Spinacia oleracea (Spinach)).